The primary structure comprises 251 residues: Imidazole glycerol phosphate synthase subunit HisF (251 aa).

Catalysis depends on residues Asp-11 and Asp-130.

The protein belongs to the HisA/HisF family. Heterodimer of HisH and HisF.

The protein resides in the cytoplasm. The enzyme catalyses 5-[(5-phospho-1-deoxy-D-ribulos-1-ylimino)methylamino]-1-(5-phospho-beta-D-ribosyl)imidazole-4-carboxamide + L-glutamine = D-erythro-1-(imidazol-4-yl)glycerol 3-phosphate + 5-amino-1-(5-phospho-beta-D-ribosyl)imidazole-4-carboxamide + L-glutamate + H(+). The protein operates within amino-acid biosynthesis; L-histidine biosynthesis; L-histidine from 5-phospho-alpha-D-ribose 1-diphosphate: step 5/9. Its function is as follows. IGPS catalyzes the conversion of PRFAR and glutamine to IGP, AICAR and glutamate. The HisF subunit catalyzes the cyclization activity that produces IGP and AICAR from PRFAR using the ammonia provided by the HisH subunit. The polypeptide is Imidazole glycerol phosphate synthase subunit HisF (Phocaeicola vulgatus (strain ATCC 8482 / DSM 1447 / JCM 5826 / CCUG 4940 / NBRC 14291 / NCTC 11154) (Bacteroides vulgatus)).